Here is a 260-residue protein sequence, read N- to C-terminus: Shikimate dehydrogenase (260 aa).

The active-site Proton acceptor is the Lys71. An NADP(+)-binding site is contributed by 124–128 (GAGGA).

This sequence belongs to the shikimate dehydrogenase family.

The enzyme catalyses shikimate + NADP(+) = 3-dehydroshikimate + NADPH + H(+). The protein operates within metabolic intermediate biosynthesis; chorismate biosynthesis; chorismate from D-erythrose 4-phosphate and phosphoenolpyruvate: step 4/7. This is Shikimate dehydrogenase (aroE) from Sulfurisphaera tokodaii (strain DSM 16993 / JCM 10545 / NBRC 100140 / 7) (Sulfolobus tokodaii).